Reading from the N-terminus, the 338-residue chain is Mas-related G-protein coupled receptor member B2 (338 aa).

The Extracellular segment spans residues 1 to 40 (MSGDFLIKNLSTSAWKTNITVLNGSYYIDTSVCVTRNQAM). N-linked (GlcNAc...) asparagine glycans are attached at residues Asn9, Asn18, and Asn23. Residues 41–61 (ILLSIIISLVGMGLNAIVLWF) traverse the membrane as a helical segment. Over 62–89 (LGIRMHTNAFTVYILNLAMADFLYLCSQ) the chain is Cytoplasmic. Residues 90–110 (FVICLLIAFYIFYSIDINIPL) traverse the membrane as a helical segment. A topological domain (extracellular) is located at residue Val111. A helical transmembrane segment spans residues 112-132 (LYVVPIFAYLSGLSILSTISI). Residues 133 to 157 (ERCLSVIWPIWYRCKRPRHTSAITC) lie on the Cytoplasmic side of the membrane. A helical membrane pass occupies residues 158–178 (FVLWVMSLLLGLLEGKACGLL). Topologically, residues 179–191 (FNSFDSYWCETFD) are extracellular. Residues 192–212 (VITNIWSVVFFGVLCGSSLTL) form a helical membrane-spanning segment. At 213–231 (LVRIFCGSQRIPMTRLYVT) the chain is on the cytoplasmic side. Residues 232 to 252 (ITLTVLVFLIFGLPFGIYWIL) form a helical membrane-spanning segment. Topologically, residues 253-268 (YQWISNFYYVEICNFY) are extracellular. Residues 269-289 (LEILFLSCVNSCMNPIIYFLV) traverse the membrane as a helical segment. Over 290-338 (GSIRHRRFRRKTLKLLLQRAMQDTPEEEQSGNKSSSEHPEELETVQSCS) the chain is Cytoplasmic. Residues 310–338 (MQDTPEEEQSGNKSSSEHPEELETVQSCS) are disordered.

It belongs to the G-protein coupled receptor 1 family. Mas subfamily. Mast cell-specific.

It is found in the cell membrane. Its function is as follows. Mast cell-specific receptor for basic secretagogues, i.e. cationic amphiphilic drugs, as well as endo- or exogenous peptides, consisting of a basic head group and a hydrophobic core. Recognizes and binds small molecules containing a cyclized tetrahydroisoquinoline (THIQ), such as non-steroidal neuromuscular blocking drugs (NMBDs), including tubocurarine and atracurium. In response to these compounds, mediates pseudo-allergic reactions characterized by histamine release, inflammation and airway contraction. The protein is Mas-related G-protein coupled receptor member B2 (Mrgprb2) of Mus musculus (Mouse).